A 307-amino-acid chain; its full sequence is Lipoyl synthase (307 aa).

Cys-55, Cys-60, Cys-66, Cys-81, Cys-85, Cys-88, and Ser-292 together coordinate [4Fe-4S] cluster. Residues 67-281 enclose the Radical SAM core domain; it reads WEDREATFLI…ARHAEELGFS (215 aa).

The protein belongs to the radical SAM superfamily. Lipoyl synthase family. [4Fe-4S] cluster serves as cofactor.

The protein localises to the cytoplasm. The enzyme catalyses [[Fe-S] cluster scaffold protein carrying a second [4Fe-4S](2+) cluster] + N(6)-octanoyl-L-lysyl-[protein] + 2 oxidized [2Fe-2S]-[ferredoxin] + 2 S-adenosyl-L-methionine + 4 H(+) = [[Fe-S] cluster scaffold protein] + N(6)-[(R)-dihydrolipoyl]-L-lysyl-[protein] + 4 Fe(3+) + 2 hydrogen sulfide + 2 5'-deoxyadenosine + 2 L-methionine + 2 reduced [2Fe-2S]-[ferredoxin]. The protein operates within protein modification; protein lipoylation via endogenous pathway; protein N(6)-(lipoyl)lysine from octanoyl-[acyl-carrier-protein]: step 2/2. Its function is as follows. Catalyzes the radical-mediated insertion of two sulfur atoms into the C-6 and C-8 positions of the octanoyl moiety bound to the lipoyl domains of lipoate-dependent enzymes, thereby converting the octanoylated domains into lipoylated derivatives. This chain is Lipoyl synthase, found in Mycobacterium avium (strain 104).